Reading from the N-terminus, the 416-residue chain is Probable endo-beta-1,4-glucanase celB (416 aa).

Residues 1 to 17 form the signal peptide; the sequence is MIWTLAPFVALLPLVTA. Asparagine 45, asparagine 104, asparagine 117, and asparagine 135 each carry an N-linked (GlcNAc...) asparagine glycan. The active-site Nucleophile is the glutamate 214. The active-site Proton donor is glutamate 219. N-linked (GlcNAc...) asparagine glycans are attached at residues asparagine 233, asparagine 278, asparagine 292, and asparagine 382.

It belongs to the glycosyl hydrolase 7 (cellulase C) family.

It is found in the secreted. The catalysed reaction is Endohydrolysis of (1-&gt;4)-beta-D-glucosidic linkages in cellulose, lichenin and cereal beta-D-glucans.. Its function is as follows. Has endoglucanase activity on substrates containing beta-1,4 glycosidic bonds, like in carboxymethylcellulose (CMC), hydroxyethylcellulose (HEC) and beta-glucan. Involved in the degradation of complex natural cellulosic substrates. The protein is Probable endo-beta-1,4-glucanase celB (celB) of Aspergillus flavus (strain ATCC 200026 / FGSC A1120 / IAM 13836 / NRRL 3357 / JCM 12722 / SRRC 167).